The sequence spans 517 residues: 3-hydroxyphenylacetate 6-hydroxylase (517 aa).

Position 449 (cysteine 449) interacts with heme.

The protein belongs to the cytochrome P450 family.

The catalysed reaction is 3-hydroxyphenylacetate + NADH + O2 + H(+) = homogentisate + NAD(+) + H2O. It carries out the reaction 3-hydroxyphenylacetate + NADPH + O2 + H(+) = homogentisate + NADP(+) + H2O. The enzyme catalyses 3,4-dihydroxyphenylacetate + NADH + O2 + H(+) = 2,4,5-trihydroxyphenylacetate + NAD(+) + H2O. It catalyses the reaction 3,4-dihydroxyphenylacetate + NADPH + O2 + H(+) = 2,4,5-trihydroxyphenylacetate + NADP(+) + H2O. Its pathway is aromatic compound metabolism; phenylacetate degradation. Functionally, catalyzes the hydroxylation of 3-hydroxyphenylacetate and 3,4-dihydroxyphenylacetate to 2,5-dihydroxyphenylacetate (homogentisate) and 2,4,5-trihydroxyphenylacetate, respectively. Both of these compounds are used as substrate by homogentisate dioxygenase in the homogentisate pathway. The homogentisate pathway is used to catabolize phenylacetate and use it as a carbon source. Can also catalyze the hydroxylation of phenylacetate to 2-hydroxyphenylacetate at low efficiency to compensate for loss of phacA. The protein is 3-hydroxyphenylacetate 6-hydroxylase (phacB) of Emericella nidulans (Aspergillus nidulans).